A 306-amino-acid chain; its full sequence is N-acetylmuramic acid 6-phosphate etherase (306 aa).

Positions 55-218 constitute an SIS domain; sequence AAATLLAGGR…STGAMIKIGK (164 aa). E83 functions as the Proton donor in the catalytic mechanism. The active site involves E114.

This sequence belongs to the GCKR-like family. MurNAc-6-P etherase subfamily. As to quaternary structure, homodimer.

It carries out the reaction N-acetyl-D-muramate 6-phosphate + H2O = N-acetyl-D-glucosamine 6-phosphate + (R)-lactate. Its pathway is amino-sugar metabolism; 1,6-anhydro-N-acetylmuramate degradation. It functions in the pathway amino-sugar metabolism; N-acetylmuramate degradation. It participates in cell wall biogenesis; peptidoglycan recycling. In terms of biological role, specifically catalyzes the cleavage of the D-lactyl ether substituent of MurNAc 6-phosphate, producing GlcNAc 6-phosphate and D-lactate. Together with AnmK, is also required for the utilization of anhydro-N-acetylmuramic acid (anhMurNAc) either imported from the medium or derived from its own cell wall murein, and thus plays a role in cell wall recycling. The chain is N-acetylmuramic acid 6-phosphate etherase from Erwinia tasmaniensis (strain DSM 17950 / CFBP 7177 / CIP 109463 / NCPPB 4357 / Et1/99).